Consider the following 229-residue polypeptide: 2,3-bisphosphoglycerate-dependent phosphoglycerate mutase (229 aa).

Residues 7–14, 20–21, Arg-59, 86–89, Lys-97, 113–114, and 182–183 each bind substrate; these read RHGQSEWN, TG, ERHY, RR, and GN. His-8 functions as the Tele-phosphohistidine intermediate in the catalytic mechanism. Glu-86 functions as the Proton donor/acceptor in the catalytic mechanism.

Belongs to the phosphoglycerate mutase family. BPG-dependent PGAM subfamily.

The catalysed reaction is (2R)-2-phosphoglycerate = (2R)-3-phosphoglycerate. The protein operates within carbohydrate degradation; glycolysis; pyruvate from D-glyceraldehyde 3-phosphate: step 3/5. Its function is as follows. Catalyzes the interconversion of 2-phosphoglycerate and 3-phosphoglycerate. The polypeptide is 2,3-bisphosphoglycerate-dependent phosphoglycerate mutase (Listeria monocytogenes serovar 1/2a (strain ATCC BAA-679 / EGD-e)).